We begin with the raw amino-acid sequence, 360 residues long: Protein Wnt-2 (360 aa).

Residues 1–37 (MIPRRSCWLILLLNLLNVQSLLDASWWSTVAQLSTAL) form the signal peptide. Disulfide bonds link Cys-80–Cys-91, Cys-130–Cys-138, Cys-140–Cys-158, Cys-213–Cys-227, Cys-215–Cys-222, Cys-289–Cys-320, Cys-305–Cys-315, Cys-319–Cys-359, Cys-335–Cys-350, Cys-337–Cys-347, and Cys-342–Cys-343. The N-linked (GlcNAc...) asparagine glycan is linked to Asn-90. Ser-219 is lipidated: O-palmitoleoyl serine; by mom-1. Asn-352 is a glycosylation site (N-linked (GlcNAc...) asparagine).

This sequence belongs to the Wnt family. In terms of processing, palmitoleoylation is required for efficient binding to frizzled receptors. Depalmitoleoylation leads to Wnt signaling pathway inhibition. Expressed in intestine, pharynx, anterior body wall muscle, vulva, some pharyngeal neurons and SMD head neurons. Expressed along the boundary between the intestine and muscle or hypodermis, but is also expressed in the hypodermis in cells including seam cells.

The protein resides in the secreted. The protein localises to the extracellular space. It localises to the extracellular matrix. In terms of biological role, ligand for members of the frizzled family of seven transmembrane receptors. Probable developmental protein. May be a signaling molecule which affects the development of discrete regions of tissues. Is likely to signal over only few cell diameters. Involved in the correct positioning of the developing nerve ring and in axon guidance of SIA and SIB neurons, probably by binding to tyrosine kinase receptor cam-1. In addition, regulates the positioning of some head neuronal cells, muscle arms associated with the nerve ring and the excretory pore. Together with Wnt ligand cwn-1, regulates the migration of CAN, ALM, BDU and HSN neurons during embryogenesis, the migration of QL and QR neuroblast descendants during larval development, and polarity of ALM neurons. May act through the wnt receptor cfz-2 to regulate QR neuroblast descendant migration, and to direct ALM migration. Also plays a role in axon growth and guidance in HSN and male CP neurons. In addition, together with wnt ligand cwn-1, negatively regulates developmental neurite pruning of AIM neurons probably by acting as a ligand for receptor tyrosine kinase cam-1. Through the cam-1 receptor also probably regulates the outgrowth of neurites from RME GABAergic motor neurons. May act redundantly with other Wnt ligands such as cwn-1 and mom-2 to control seam cell polarity. The sequence is that of Protein Wnt-2 from Caenorhabditis elegans.